We begin with the raw amino-acid sequence, 612 residues long: Dihydroxy-acid dehydratase (612 aa).

Asp81 contacts Mg(2+). Cys122 contributes to the [2Fe-2S] cluster binding site. The Mg(2+) site is built by Asp123 and Lys124. Position 124 is an N6-carboxylysine (Lys124). Cys193 contributes to the [2Fe-2S] cluster binding site. Mg(2+) is bound at residue Glu489. Ser515 serves as the catalytic Proton acceptor.

The protein belongs to the IlvD/Edd family. As to quaternary structure, homodimer. Requires [2Fe-2S] cluster as cofactor. It depends on Mg(2+) as a cofactor.

The catalysed reaction is (2R)-2,3-dihydroxy-3-methylbutanoate = 3-methyl-2-oxobutanoate + H2O. The enzyme catalyses (2R,3R)-2,3-dihydroxy-3-methylpentanoate = (S)-3-methyl-2-oxopentanoate + H2O. It functions in the pathway amino-acid biosynthesis; L-isoleucine biosynthesis; L-isoleucine from 2-oxobutanoate: step 3/4. Its pathway is amino-acid biosynthesis; L-valine biosynthesis; L-valine from pyruvate: step 3/4. In terms of biological role, functions in the biosynthesis of branched-chain amino acids. Catalyzes the dehydration of (2R,3R)-2,3-dihydroxy-3-methylpentanoate (2,3-dihydroxy-3-methylvalerate) into 2-oxo-3-methylpentanoate (2-oxo-3-methylvalerate) and of (2R)-2,3-dihydroxy-3-methylbutanoate (2,3-dihydroxyisovalerate) into 2-oxo-3-methylbutanoate (2-oxoisovalerate), the penultimate precursor to L-isoleucine and L-valine, respectively. The sequence is that of Dihydroxy-acid dehydratase from Xanthomonas campestris pv. campestris (strain B100).